A 277-amino-acid chain; its full sequence is Tetrahydroxynaphthalene reductase PfmaG (277 aa).

NADP(+)-binding residues include Ile-36, Asp-82, and Asn-109. Residues Ser-158, Ser-159, and Tyr-173 each act as proton donor in the active site. The NADP(+) site is built by Tyr-173, Lys-177, Ile-206, and Thr-208. Lys-177 (lowers pKa of active site Tyr) is an active-site residue.

It belongs to the short-chain dehydrogenases/reductases (SDR) family.

The catalysed reaction is scytalone + NADP(+) = naphthalene-1,3,6,8-tetrol + NADPH + H(+). It participates in pigment biosynthesis; melanin biosynthesis. Functionally, tetrahydroxynaphthalene reductase; part of the gene cluster that mediates the biosynthesis of dihydroxynaphthalene (DHN)-melanin, a bluish-green pigment forming a dark layer in the conidial wall that protects the conidia from UV radiations. The first step of the pathway is the production of the pentaketide 1,3,6,8-tetrahydroxynaphthalene (1,3,6,8-THN or T4HN) by the polyketide synthase PfmaE though condensation of acetyl-CoA with malonyl-CoA. T4HN is not stable and easily oxidizes into the stable form flaviolin. T4HN is also substrate of the hydroxynaphthalene reductase PfmaG to yield scytalone. The scytalone dehydratase PfmaJ then reduces scytalone to 1,3,8-THN. 1,3,8-THN is then substrate of the hydroxynaphthalene reductase PfmaI to yield vermelone. Vermelone is further converted by the multicopper oxidase PfmaD to 1,8-DHN. Finally the laccase PFICI_06862 transforms 1,8-DHN to DHN-melanin. The roles of the 5-oxoprolinase PfmaA and the proline iminopeptidase PfmaB within the cluster have not been elucidated yet. The protein is Tetrahydroxynaphthalene reductase PfmaG of Pestalotiopsis fici (strain W106-1 / CGMCC3.15140).